We begin with the raw amino-acid sequence, 421 residues long: tRNA(Ile)-lysidine synthase (421 aa).

26 to 31 is an ATP binding site; that stretch reads SGGADS.

It belongs to the tRNA(Ile)-lysidine synthase family.

It localises to the cytoplasm. It catalyses the reaction cytidine(34) in tRNA(Ile2) + L-lysine + ATP = lysidine(34) in tRNA(Ile2) + AMP + diphosphate + H(+). In terms of biological role, ligates lysine onto the cytidine present at position 34 of the AUA codon-specific tRNA(Ile) that contains the anticodon CAU, in an ATP-dependent manner. Cytidine is converted to lysidine, thus changing the amino acid specificity of the tRNA from methionine to isoleucine. This Streptococcus thermophilus (strain CNRZ 1066) protein is tRNA(Ile)-lysidine synthase.